The sequence spans 550 residues: Hydroxylamine reductase (550 aa).

Cys3, Cys6, Cys18, and Cys25 together coordinate [2Fe-2S] cluster. Residues His249, Glu273, Cys317, Cys405, Cys433, Cys458, Glu492, and Lys494 each coordinate hybrid [4Fe-2O-2S] cluster. Cys405 carries the post-translational modification Cysteine persulfide.

Belongs to the HCP family. Requires [2Fe-2S] cluster as cofactor. Hybrid [4Fe-2O-2S] cluster is required as a cofactor.

It is found in the cytoplasm. The enzyme catalyses A + NH4(+) + H2O = hydroxylamine + AH2 + H(+). In terms of biological role, catalyzes the reduction of hydroxylamine to form NH(3) and H(2)O. The protein is Hydroxylamine reductase of Escherichia fergusonii (strain ATCC 35469 / DSM 13698 / CCUG 18766 / IAM 14443 / JCM 21226 / LMG 7866 / NBRC 102419 / NCTC 12128 / CDC 0568-73).